We begin with the raw amino-acid sequence, 355 residues long: Guanine nucleotide-binding protein G(i) subunit alpha-2 (355 aa).

Gly2 is lipidated: N-myristoyl glycine. A lipid anchor (S-palmitoyl cysteine) is attached at Cys3. A G-alpha domain is found at 32–355 (REVKLLLLGA…KNNLKDCGLF (324 aa)). Residues 35 to 48 (KLLLLGAGESGKST) form a G1 motif region. GTP is bound by residues 40-47 (GAGESGKS), 176-182 (LRTRVKT), 201-205 (DVGGQ), 270-273 (NKKD), and Ala327. Residues Ser47 and Thr182 each coordinate Mg(2+). The segment at 174–182 (DVLRTRVKT) is G2 motif. Residues 197 to 206 (FKMFDVGGQR) form a G3 motif region. Positions 266–273 (ILFLNKKD) are G4 motif. Residues 325 to 330 (TCATDT) form a G5 motif region.

Belongs to the G-alpha family. G(i/o/t/z) subfamily. As to quaternary structure, g proteins are composed of 3 units; alpha, beta and gamma. The alpha chain contains the guanine nucleotide binding site.

It localises to the cytoplasm. It is found in the cytoskeleton. Its subcellular location is the microtubule organizing center. The protein resides in the centrosome. The protein localises to the cell membrane. In terms of biological role, guanine nucleotide-binding proteins (G proteins) are involved as modulators or transducers in various transmembrane signaling systems. The G(i) proteins are involved in hormonal regulation of adenylate cyclase: they inhibit the cyclase in response to beta-adrenergic stimuli. May play a role in cell division. This Oryzias latipes (Japanese rice fish) protein is Guanine nucleotide-binding protein G(i) subunit alpha-2 (gnai2).